The chain runs to 148 residues: Transcriptional regulator MraZ (148 aa).

2 SpoVT-AbrB domains span residues glutamate 5–glutamate 53 and serine 82–alanine 125.

The protein belongs to the MraZ family. As to quaternary structure, forms oligomers.

Its subcellular location is the cytoplasm. It is found in the nucleoid. The protein is Transcriptional regulator MraZ of Xylella fastidiosa (strain 9a5c).